Consider the following 499-residue polypeptide: Protein adenylyltransferase Fic (499 aa).

The chain crosses the membrane as a helical span at residues 38–58 (FHYFVIFASGSLFSGLMFGLL). TPR repeat units lie at residues 126-159 (ALSSLKVAIEMKTMGKDDKAARLFQHALALSPKH) and 160-194 (PEILTKYGEFLEHNQQDVVRADHYYYQALTVNPSH). An Inhibitory (S/T)XXXE(G/N) motif motif is present at residues 251–256 (SVGIEG). Residues glutamate 255 and 337–340 (VGGH) contribute to the ATP site. Residues 306–441 (ITLKDILEIH…IRPFVRFIAD (136 aa)) enclose the Fido domain. Residue histidine 384 is part of the active site. ATP-binding positions include 388–395 (DGNGRTSR), 420–421 (YY), and asparagine 428.

It belongs to the fic family. Homodimer.

It localises to the membrane. The enzyme catalyses L-tyrosyl-[protein] + ATP = O-(5'-adenylyl)-L-tyrosyl-[protein] + diphosphate. It catalyses the reaction L-threonyl-[protein] + ATP = 3-O-(5'-adenylyl)-L-threonyl-[protein] + diphosphate. The catalysed reaction is 3-O-(5'-adenylyl)-L-threonyl-[protein] + H2O = L-threonyl-[protein] + AMP + H(+). The side chain of Glu-255 determines which of the two opposing activities (AMPylase or de-AMPylase) will take place. In response to endoplasmic reticulum stress, mediates de-AMPylase activity. Adenylyltransferase activity is inhibited by the inhibitory helix present at the N-terminus: Glu-255 binds ATP and competes with ATP-binding at Arg-395, thereby preventing adenylyltransferase activity. In unstressed cells, disengagement of Glu-255 promotes adenylyltransferase activity. Activation dissociates ATP-binding from Glu-255, allowing ordered binding of the entire ATP moiety with the alpha-phosphate in an orientation that is productive for accepting an incoming target hydroxyl side chain. Its function is as follows. Protein that can both mediate the addition of adenosine 5'-monophosphate (AMP) to specific residues of target proteins (AMPylation), and the removal of the same modification from target proteins (de-AMPylation), depending on the context. The side chain of Glu-255 determines which of the two opposing activities (AMPylase or de-AMPylase) will take place. Acts as a key regulator of the unfolded protein response (UPR) by mediating AMPylation or de-AMPylation of Hsc70-3/BiP. In unstressed cells, acts as an adenylyltransferase by mediating AMPylation of Hsc70-3/BiP at 'Thr-518', thereby inactivating it. In response to endoplasmic reticulum stress, acts as a phosphodiesterase by mediating removal of ATP (de-AMPylation) from Hsc70-3/BiP at 'Thr-518', leading to restore HSPA5/BiP activity. The sequence is that of Protein adenylyltransferase Fic from Aedes aegypti (Yellowfever mosquito).